A 469-amino-acid chain; its full sequence is Putative F-box/LRR-repeat protein At5g02930 (469 aa).

Residues 27-77 enclose the F-box domain; it reads VDSISDLPDAVLQHIFSYIPTELAIRTSVLSKRWRHVWSETPHLSFEWLKV. 6 LRR repeats span residues 30–58, 178–203, 204–214, 223–250, 296–321, and 341–366; these read ISDLPDAVLQHIFSYIPTELAIRTSVLSK, DCTMSDESFLEILSGCPILESLSLKF, CMSLKYLNLSK, IERISYIRAPMLSMQIVAPYIHYLRLRD, TMLKTFQKVEKLTLGVNLLQMLSLSK, and IIRSVVPGIARLLQNLPGLKKITVYT.

The polypeptide is Putative F-box/LRR-repeat protein At5g02930 (Arabidopsis thaliana (Mouse-ear cress)).